A 505-amino-acid polypeptide reads, in one-letter code: Alpha-ketoglutarate-dependent dioxygenase FTO (505 aa).

T4 carries the phosphothreonine modification. The fe2OG dioxygenase domain stretch occupies residues T32–S327. 2 residues coordinate substrate: R96 and Y108. Residue N205 coordinates 2-oxoglutarate. A loop L1; predicted to block binding of double-stranded DNA or RNA region spans residues P213–G224. An N6-acetyllysine modification is found at K216. 2 residues coordinate Fe cation: H231 and D233. H231–E234 lines the substrate pocket. Y295 is a binding site for 2-oxoglutarate. A Fe cation-binding site is contributed by H307. Residues R316 to S318, T320, and R322 contribute to the 2-oxoglutarate site.

The protein belongs to the fto family. As to quaternary structure, monomer. May also exist as homodimer. The cofactor is Fe(2+).

Its subcellular location is the nucleus. The protein resides in the nucleus speckle. It is found in the cytoplasm. It carries out the reaction a 5'-end (N(7)-methyl 5'-triphosphoguanosine)-(N(6),2'-O-dimethyladenosine) in mRNA + 2-oxoglutarate + O2 = a 5'-end (N(7)-methyl 5'-triphosphoguanosine)-(2'-O-methyladenosine) in mRNA + formaldehyde + succinate + CO2. The enzyme catalyses an N(6)-methyladenosine in mRNA + 2-oxoglutarate + O2 = an adenosine in mRNA + formaldehyde + succinate + CO2. The catalysed reaction is N(6)-methyladenosine in U6 snRNA + 2-oxoglutarate + O2 = adenosine in U6 snRNA + formaldehyde + succinate + CO2. It catalyses the reaction a 5'-end (N(7)-methyl 5'-triphosphoguanosine)-(N(6),2'-O-dimethyladenosine) in U6 snRNA + 2-oxoglutarate + O2 = a 5'-end (N(7)-methyl 5'-triphosphoguanosine)-(2'-O-methyladenosine) in U6 snRNA + formaldehyde + succinate + CO2. It carries out the reaction an N(1)-methyladenosine in tRNA + 2-oxoglutarate + O2 = an adenosine in tRNA + formaldehyde + succinate + CO2. Activated by ascorbate. Inhibited by N-oxalylglycine, fumarate and succinate. Its function is as follows. RNA demethylase that mediates oxidative demethylation of different RNA species, such as mRNAs, tRNAs and snRNAs, and acts as a regulator of fat mass, adipogenesis and energy homeostasis. Specifically demethylates N(6)-methyladenosine (m6A) RNA, the most prevalent internal modification of messenger RNA (mRNA) in higher eukaryotes. M6A demethylation by FTO affects mRNA expression and stability. Also able to demethylate m6A in U6 small nuclear RNA (snRNA). Mediates demethylation of N(6),2'-O-dimethyladenosine cap (m6A(m)), by demethylating the N(6)-methyladenosine at the second transcribed position of mRNAs and U6 snRNA. Demethylation of m6A(m) in the 5'-cap by FTO affects mRNA stability by promoting susceptibility to decapping. Also acts as a tRNA demethylase by removing N(1)-methyladenine from various tRNAs. Has no activity towards 1-methylguanine. Has no detectable activity towards double-stranded DNA. Also able to repair alkylated DNA and RNA by oxidative demethylation: demethylates single-stranded RNA containing 3-methyluracil, single-stranded DNA containing 3-methylthymine and has low demethylase activity towards single-stranded DNA containing 1-methyladenine or 3-methylcytosine. Ability to repair alkylated DNA and RNA is however unsure in vivo. Involved in the regulation of fat mass, adipogenesis and body weight, thereby contributing to the regulation of body size and body fat accumulation. Involved in the regulation of thermogenesis and the control of adipocyte differentiation into brown or white fat cells. Regulates activity of the dopaminergic midbrain circuitry via its ability to demethylate m6A in mRNAs. The sequence is that of Alpha-ketoglutarate-dependent dioxygenase FTO from Pongo abelii (Sumatran orangutan).